The primary structure comprises 348 residues: Probable dual-specificity RNA methyltransferase RlmN (348 aa).

The active-site Proton acceptor is the Glu-93. The Radical SAM core domain occupies Thr-99–Asp-333. An intrachain disulfide couples Cys-106 to Cys-338. [4Fe-4S] cluster-binding residues include Cys-113, Cys-117, and Cys-120. Residues Gly-160–Glu-161, Ser-190, Ser-219–His-221, and Asn-295 each bind S-adenosyl-L-methionine. The active-site S-methylcysteine intermediate is the Cys-338.

This sequence belongs to the radical SAM superfamily. RlmN family. [4Fe-4S] cluster is required as a cofactor.

Its subcellular location is the cytoplasm. It catalyses the reaction adenosine(2503) in 23S rRNA + 2 reduced [2Fe-2S]-[ferredoxin] + 2 S-adenosyl-L-methionine = 2-methyladenosine(2503) in 23S rRNA + 5'-deoxyadenosine + L-methionine + 2 oxidized [2Fe-2S]-[ferredoxin] + S-adenosyl-L-homocysteine. The catalysed reaction is adenosine(37) in tRNA + 2 reduced [2Fe-2S]-[ferredoxin] + 2 S-adenosyl-L-methionine = 2-methyladenosine(37) in tRNA + 5'-deoxyadenosine + L-methionine + 2 oxidized [2Fe-2S]-[ferredoxin] + S-adenosyl-L-homocysteine. In terms of biological role, specifically methylates position 2 of adenine 2503 in 23S rRNA and position 2 of adenine 37 in tRNAs. This Prochlorococcus marinus (strain AS9601) protein is Probable dual-specificity RNA methyltransferase RlmN.